The chain runs to 89 residues: Nucleoside triphosphatase I (89 aa).

The region spanning 42 to 89 (FLGLDKMHSLLLFHDTGVGKTITTTFIIKQLKNIYTNWSILLLVKKHL) is the Helicase ATP-binding domain. 55–62 (HDTGVGKT) is an ATP binding site.

The protein belongs to the helicase family. NPH I subfamily.

The catalysed reaction is a ribonucleoside 5'-triphosphate + H2O = a ribonucleoside 5'-diphosphate + phosphate + H(+). Its function is as follows. Serves two roles in transcription; it acts in concert with viral termination factor/capping enzyme to catalyze release of UUUUUNU-containing nascent RNA from the elongation complex, and it acts by itself as a polymerase elongation factor to facilitate readthrough of intrinsic pause sites. This Swinepox virus (strain Kasza) (SWPV) protein is Nucleoside triphosphatase I (NPH1).